A 350-amino-acid chain; its full sequence is Glucose-6-phosphate 3-dehydrogenase (350 aa).

Belongs to the Gfo/Idh/MocA family.

It carries out the reaction D-glucose 6-phosphate + NAD(+) = 3-dehydro-D-glucose 6-phosphate + NADH + H(+). It functions in the pathway antibiotic biosynthesis; kanosamine biosynthesis. Involved in the biosynthesis of kanosamine (3-amino-3-deoxy-D-glucose), which is known to have antibiotic and antifungal properties, and to be a precursor of the antibiotic neotrehalosadiamine (3,3'-diamino-3,3'-dideoxy-alpha,beta-trehalose (NTD)). Catalyzes the oxidation of glucose 6-phosphate to 3-oxo-D-glucose 6-phosphate. It can only use NAD. The polypeptide is Glucose-6-phosphate 3-dehydrogenase (ntdC) (Bacillus subtilis (strain 168)).